We begin with the raw amino-acid sequence, 172 residues long: UPF0102 protein AM1_3954 (172 aa).

The protein belongs to the UPF0102 family.

The sequence is that of UPF0102 protein AM1_3954 from Acaryochloris marina (strain MBIC 11017).